Reading from the N-terminus, the 238-residue chain is Ribosomal RNA large subunit methyltransferase E (238 aa).

S-adenosyl-L-methionine is bound by residues Gly-76, Trp-78, Asp-99, Asp-115, and Asp-139. The active-site Proton acceptor is the Lys-179.

It belongs to the class I-like SAM-binding methyltransferase superfamily. RNA methyltransferase RlmE family.

Its subcellular location is the cytoplasm. The catalysed reaction is uridine(2552) in 23S rRNA + S-adenosyl-L-methionine = 2'-O-methyluridine(2552) in 23S rRNA + S-adenosyl-L-homocysteine + H(+). Its function is as follows. Specifically methylates the uridine in position 2552 of 23S rRNA at the 2'-O position of the ribose in the fully assembled 50S ribosomal subunit. In Rhodopseudomonas palustris (strain BisB18), this protein is Ribosomal RNA large subunit methyltransferase E.